A 512-amino-acid chain; its full sequence is Glycerol kinase 1 (512 aa).

T18 serves as a coordination point for ADP. ATP-binding residues include T18, T19, and S20. Sn-glycerol 3-phosphate is bound at residue T18. Position 22 (R22) interacts with ADP. The sn-glycerol 3-phosphate site is built by R88, E89, Y140, and D255. Residues R88, E89, Y140, D255, and Q256 each contribute to the glycerol site. 2 residues coordinate ADP: T277 and G321. T277, G321, Q325, and G422 together coordinate ATP. 2 residues coordinate ADP: G422 and N426.

The protein belongs to the FGGY kinase family.

The enzyme catalyses glycerol + ATP = sn-glycerol 3-phosphate + ADP + H(+). Its pathway is polyol metabolism; glycerol degradation via glycerol kinase pathway; sn-glycerol 3-phosphate from glycerol: step 1/1. Its activity is regulated as follows. Inhibited by fructose 1,6-bisphosphate (FBP). Its function is as follows. Key enzyme in the regulation of glycerol uptake and metabolism. Catalyzes the phosphorylation of glycerol to yield sn-glycerol 3-phosphate. The polypeptide is Glycerol kinase 1 (Streptomyces avermitilis (strain ATCC 31267 / DSM 46492 / JCM 5070 / NBRC 14893 / NCIMB 12804 / NRRL 8165 / MA-4680)).